Reading from the N-terminus, the 471-residue chain is Glutamate--tRNA ligase (471 aa).

The short motif at 9–19 (PSPTGYLHVGG) is the 'HIGH' region element. Zn(2+) is bound by residues cysteine 98, cysteine 100, cysteine 125, and histidine 127. Residues 237-241 (KLSKR) carry the 'KMSKS' region motif. Lysine 240 contacts ATP.

This sequence belongs to the class-I aminoacyl-tRNA synthetase family. Glutamate--tRNA ligase type 1 subfamily. In terms of assembly, monomer. Zn(2+) serves as cofactor.

It is found in the cytoplasm. The enzyme catalyses tRNA(Glu) + L-glutamate + ATP = L-glutamyl-tRNA(Glu) + AMP + diphosphate. Functionally, catalyzes the attachment of glutamate to tRNA(Glu) in a two-step reaction: glutamate is first activated by ATP to form Glu-AMP and then transferred to the acceptor end of tRNA(Glu). The sequence is that of Glutamate--tRNA ligase from Salmonella enteritidis PT4 (strain P125109).